We begin with the raw amino-acid sequence, 147 residues long: Large ribosomal subunit protein bL9 (147 aa).

It belongs to the bacterial ribosomal protein bL9 family.

Binds to the 23S rRNA. In Geobacter sp. (strain M21), this protein is Large ribosomal subunit protein bL9.